The sequence spans 593 residues: MEDYKQRIKNKLNVVPMEPGCYLMKDRNDQVIYVGKAKKLRNRLRSYFTGAHDAKTTRLVGEIRRFEFIVTSSETESLLLELNLIKQYQPRYNILLKDDKSYPFIKITKEKYPRLLVTRTVKQGTGKYFGPYPNAYSAQETKKLLDRIYPYRKCDKMPDKLCLYYHIGQCLGPCVYDVDLSKYAQMTKEITDFLNGEDKTILKSLEERMLTASESLDFERAKEYRDLIQHIQNLTNKQKIMSSDKTIRDVFGYSVDKGWMCIQVFFIRQGNMIKRDTTMIPLQQTEEEEFYTFIGQFYSLNQHILPKEVHVPRNLDKEMIQSVVDTKIVQPARGPKKDMVDLAAHNAKVSLNNKFELISRDESRTIKAIEELGTQMGIQTPIRIEAFDNSNIQGVDPVSAMVTFVDGKPDKKNYRKYKIKTVKGPDDYKSMREVVRRRYSRVLNEGLPLPDLIIVDGGKGHMNGVIDVLQNELGLDIPVAGLQKNDKHQTSELLYGASAEIVPLKKNSQAFYLLHRIQDEVHRFAITFHRQTRQKTGLKSILDDIDGIGNKRKTLLLRSFGSIKKMKEATLEDFKNIGIPENVAKNLHEQLHK.

Positions 17 to 94 (MEPGCYLMKD…IKQYQPRYNI (78 aa)) constitute a GIY-YIG domain. In terms of domain architecture, UVR spans 199–234 (KTILKSLEERMLTASESLDFERAKEYRDLIQHIQNL).

Belongs to the UvrC family. As to quaternary structure, interacts with UvrB in an incision complex.

It localises to the cytoplasm. Its function is as follows. The UvrABC repair system catalyzes the recognition and processing of DNA lesions. UvrC both incises the 5' and 3' sides of the lesion. The N-terminal half is responsible for the 3' incision and the C-terminal half is responsible for the 5' incision. The polypeptide is UvrABC system protein C (Staphylococcus aureus (strain USA300)).